The chain runs to 379 residues: Stimulator of interferon genes protein (379 aa).

A run of 2 helical transmembrane segments spans residues 18 to 38 (AKKA…DLGE) and 43 to 63 (ILQW…FKGV). Residues Cys-88 and Cys-91 are each lipidated (S-palmitoyl cysteine). The next 2 helical transmembrane spans lie at 89-109 (LGCP…YTPF) and 114-134 (HLPF…SILL). The cyclic dinucleotide-binding domain (CBD) stretch occupies residues 153 to 340 (LNVAQGMAWS…RHLKQEEKEE (188 aa)). 2',3'-cGAMP-binding residues include Ser-162, Tyr-167, Arg-238, and Thr-263. 3',3'-c-di-GMP-binding positions include Ser-162, Tyr-167, 238 to 241 (RVYT), and Thr-263. Residues Tyr-167, Arg-238, and Thr-263 each coordinate 2',3'-cUAMP. Residues 338–363 (KEEVTVDSARTSVMPDPSMLPQGPEL) are disordered. The C-terminal tail (CTT) stretch occupies residues 340–379 (EVTVDSARTSVMPDPSMLPQGPELLISSMDQPLPLRTDVF). Ser-355 is subject to Phosphoserine. The pLxIS motif motif lies at 363-366 (LLIS). Ser-366 is modified (phosphoserine; by TBK1).

Belongs to the STING family. Homodimer; forms a homodimer in absence of cyclic nucleotide (c-di-GMP or cGAMP). Homotetramer; in presence of cyclic nucleotide (c-di-GMP or cGAMP), forms tetramers and higher-order oligomers through side-by-side packing. Interacts (when phosphorylated) with IRF3; following activation and phosphorylation on the pLxIS motif by TBK1, recruits IRF3. Interacts with TBK1; when homodimer, leading to subsequent production of IFN-beta. Interacts (via transmembrane domain) with TMEM203. Post-translationally, phosphorylation by TBK1 leads to activation and production of IFN-beta. Following cyclic nucleotide (c-di-GMP or cGAMP)-binding, activation and translocation from the endoplasmic reticulum, STING1 is phosphorylated by TBK1 at Ser-366 in the pLxIS motif. The phosphorylated pLxIS motif constitutes an IRF3-binding motif, leading to recruitment of the transcription factor IRF3 to induce type-I interferons and other cytokines. In contrast, lacks phosphorylation site at position 358, leading to reduced production of type-I interferons and other cytokines.

It is found in the endoplasmic reticulum membrane. The protein resides in the cytoplasm. It localises to the perinuclear region. Its subcellular location is the endoplasmic reticulum-Golgi intermediate compartment membrane. The protein localises to the golgi apparatus membrane. It is found in the cytoplasmic vesicle. The protein resides in the autophagosome membrane. It localises to the mitochondrion outer membrane. Its subcellular location is the cell membrane. The catalysed reaction is H(+)(in) = H(+)(out). In terms of biological role, facilitator of innate immune signaling that acts as a sensor of cytosolic DNA from bacteria and viruses and promotes low production of type I interferon (IFN-alpha and IFN-beta). Compared to other mammals, STING1-dependent type I interferon induction is strongly reduced in bats, suggesting that the cGAS-STING pathway promotes a limited inflammatory response. Innate immune response is triggered in response to non-CpG double-stranded DNA from viruses and bacteria delivered to the cytoplasm. Acts by binding cyclic dinucleotides: recognizes and binds cyclic di-GMP (c-di-GMP), a second messenger produced by bacteria, cyclic UMP-AMP (2',3'-cUAMP), and cyclic GMP-AMP (cGAMP), a messenger produced by CGAS in response to DNA virus in the cytosol. Upon binding to c-di-GMP, cUAMP or cGAMP, STING1 oligomerizes, translocates from the endoplasmic reticulum and is phosphorylated by TBK1 on the pLxIS motif, leading to recruitment and subsequent activation of the transcription factor IRF3 to induce expression of type I interferon and exert a potent anti-viral state. In addition to promote the production of type I interferons, plays a direct role in autophagy. Following cGAMP-binding, STING1 buds from the endoplasmic reticulum into COPII vesicles, which then form the endoplasmic reticulum-Golgi intermediate compartment (ERGIC). The ERGIC serves as the membrane source for WIPI2 recruitment and LC3 lipidation, leading to formation of autophagosomes that target cytosolic DNA or DNA viruses for degradation by the lysosome. Promotes autophagy by acting as a proton channel that directs proton efflux from the Golgi to facilitate MAP1LC3B/LC3B lipidation. The autophagy- and interferon-inducing activities can be uncoupled and autophagy induction is independent of TBK1 phosphorylation. This is Stimulator of interferon genes protein from Pteronotus parnellii (Parnell's mustached bat).